The primary structure comprises 335 residues: NADH-quinone oxidoreductase subunit H (335 aa).

A run of 8 helical transmembrane segments spans residues 12 to 32 (IIAV…GALL), 81 to 101 (VIFT…FAVI), 114 to 134 (IGLL…LFAG), 154 to 174 (VSYE…VGSF), 187 to 207 (LWFI…GVAV), 238 to 258 (FFVG…TLFF), 270 to 290 (SLAF…FILL), and 307 to 327 (WKFC…IVLL).

It belongs to the complex I subunit 1 family. In terms of assembly, NDH-1 is composed of 13 different subunits. Subunits NuoA, H, J, K, L, M, N constitute the membrane sector of the complex.

It localises to the cell inner membrane. The catalysed reaction is a quinone + NADH + 5 H(+)(in) = a quinol + NAD(+) + 4 H(+)(out). Its function is as follows. NDH-1 shuttles electrons from NADH, via FMN and iron-sulfur (Fe-S) centers, to quinones in the respiratory chain. The immediate electron acceptor for the enzyme in this species is believed to be ubiquinone. Couples the redox reaction to proton translocation (for every two electrons transferred, four hydrogen ions are translocated across the cytoplasmic membrane), and thus conserves the redox energy in a proton gradient. This subunit may bind ubiquinone. In Pseudomonas syringae pv. syringae (strain B728a), this protein is NADH-quinone oxidoreductase subunit H.